The chain runs to 254 residues: Ubiquinone/menaquinone biosynthesis C-methyltransferase UbiE (254 aa).

Residues Thr-77, Asp-98, 126–127 (DA), and Ser-143 each bind S-adenosyl-L-methionine.

Belongs to the class I-like SAM-binding methyltransferase superfamily. MenG/UbiE family.

It carries out the reaction a 2-demethylmenaquinol + S-adenosyl-L-methionine = a menaquinol + S-adenosyl-L-homocysteine + H(+). The enzyme catalyses a 2-methoxy-6-(all-trans-polyprenyl)benzene-1,4-diol + S-adenosyl-L-methionine = a 5-methoxy-2-methyl-3-(all-trans-polyprenyl)benzene-1,4-diol + S-adenosyl-L-homocysteine + H(+). The protein operates within quinol/quinone metabolism; menaquinone biosynthesis; menaquinol from 1,4-dihydroxy-2-naphthoate: step 2/2. Its pathway is cofactor biosynthesis; ubiquinone biosynthesis. Methyltransferase required for the conversion of demethylmenaquinol (DMKH2) to menaquinol (MKH2) and the conversion of 2-polyprenyl-6-methoxy-1,4-benzoquinol (DDMQH2) to 2-polyprenyl-3-methyl-6-methoxy-1,4-benzoquinol (DMQH2). The polypeptide is Ubiquinone/menaquinone biosynthesis C-methyltransferase UbiE (Blochmanniella pennsylvanica (strain BPEN)).